The primary structure comprises 275 residues: Protein FAM210A (275 aa).

The disordered stretch occupies residues 51–100; it reads KWLHSQPKQQDTATKTPVHDLPSGIQHQSEETSPSARSSISTDPSSIAEE. 2 stretches are compositionally biased toward polar residues: residues 56–65 and 75–95; these read QPKQQDTATK and IQHQSEETSPSARSSISTDPS. A DUF1279 domain is found at 105–217; sequence DQSIGLLKRF…GYLSTPPLVK (113 aa). Residues 124-144 traverse the membrane as a helical segment; sequence VLIPVHLVTSSIWFGSFYYAA. A coiled-coil region spans residues 221–275; it reads QDRMEETKELFTEKMEETRDIISGKMEETKDRISEKLQETKDRVAFRKKKNEDME.

The protein belongs to the FAM210 family.

The protein resides in the membrane. The protein localises to the mitochondrion. It localises to the cytoplasm. May play a role in the structure and strength of both muscle and bone. In Xenopus laevis (African clawed frog), this protein is Protein FAM210A (fam210a).